The sequence spans 311 residues: Dehydrogenase/reductase SDR family member 7C (311 aa).

Residues 1-18 (MGFLTFLIVPLLILGISG) form the signal peptide. 41–65 (VITDAISGLGKECSRVFHSAGARLV) lines the NAD(+) pocket. T178 is a substrate binding site. Residue Y191 is the Proton acceptor of the active site.

It belongs to the short-chain dehydrogenases/reductases (SDR) family.

It localises to the secreted. Putative oxidoreductase. This is Dehydrogenase/reductase SDR family member 7C (dhrs7c) from Xenopus tropicalis (Western clawed frog).